A 189-amino-acid polypeptide reads, in one-letter code: Ribonuclease HII (189 aa).

An RNase H type-2 domain is found at Met-1–Cys-189. Residues Asp-6, Glu-7, and Asp-98 each coordinate a divalent metal cation.

It belongs to the RNase HII family. Mn(2+) serves as cofactor. The cofactor is Mg(2+).

It localises to the cytoplasm. The enzyme catalyses Endonucleolytic cleavage to 5'-phosphomonoester.. Its function is as follows. Endonuclease that specifically degrades the RNA of RNA-DNA hybrids. In Acinetobacter baylyi (strain ATCC 33305 / BD413 / ADP1), this protein is Ribonuclease HII.